Reading from the N-terminus, the 149-residue chain is Probable microsomal glutathione S-transferase (149 aa).

The next 2 membrane-spanning stretches (helical) occupy residues 7 to 27 (SIFP…IGLW) and 123 to 143 (LSHI…GSSL).

This sequence belongs to the MAPEG family.

The protein localises to the membrane. It carries out the reaction RX + glutathione = an S-substituted glutathione + a halide anion + H(+). In terms of biological role, may perform the conjugation of reduced glutathione to electrophiles. This Dictyostelium discoideum (Social amoeba) protein is Probable microsomal glutathione S-transferase (mgst).